Here is a 339-residue protein sequence, read N- to C-terminus: Heat-inducible transcription repressor HrcA (339 aa).

The protein belongs to the HrcA family.

In terms of biological role, negative regulator of class I heat shock genes (grpE-dnaK-dnaJ and groELS operons). Prevents heat-shock induction of these operons. The polypeptide is Heat-inducible transcription repressor HrcA (Clostridioides difficile (strain 630) (Peptoclostridium difficile)).